Here is a 415-residue protein sequence, read N- to C-terminus: Levansucrase (415 aa).

Sucrose contacts are provided by Trp45, Asp46, Ala132, Arg202, and Asp203. Asp46 serves as the catalytic Nucleophile. Catalysis depends on Glu287, which acts as the Proton donor/acceptor.

Belongs to the glycosyl hydrolase 68 family.

The catalysed reaction is [6)-beta-D-fructofuranosyl-(2-&gt;](n) alpha-D-glucopyranoside + sucrose = [6)-beta-D-fructofuranosyl-(2-&gt;](n+1) alpha-D-glucopyranoside + D-glucose. Functionally, catalyzes the synthesis of levan, a fructose polymer, by transferring the fructosyl moiety from sucrose to a growing acceptor molecule. The polypeptide is Levansucrase (Rahnella aquatilis (strain ATCC 33071 / DSM 4594 / JCM 1683 / NBRC 105701 / NCIMB 13365 / CIP 78.65)).